The following is a 301-amino-acid chain: D-alanine--D-alanine ligase (301 aa).

The region spanning 99-294 (KCILKAANIR…FSELIDMIID (196 aa)) is the ATP-grasp domain. 126–181 (IEGMGYPVVVKPTHGGSSVATFIIKEEKDIKNAVTEAFKWDSEVIIEKFIKGDEIT) lines the ATP pocket. The Mg(2+) site is built by D248, E261, and N263.

The protein belongs to the D-alanine--D-alanine ligase family. Mg(2+) is required as a cofactor. The cofactor is Mn(2+).

Its subcellular location is the cytoplasm. The enzyme catalyses 2 D-alanine + ATP = D-alanyl-D-alanine + ADP + phosphate + H(+). It participates in cell wall biogenesis; peptidoglycan biosynthesis. In terms of biological role, cell wall formation. This chain is D-alanine--D-alanine ligase, found in Clostridium botulinum (strain Eklund 17B / Type B).